We begin with the raw amino-acid sequence, 45 residues long: Large ribosomal subunit protein bL36 (45 aa).

The tract at residues 26–45 is disordered; it reads VINKKDPNRKQRQKGPARKK. Residues 35 to 45 are compositionally biased toward basic residues; the sequence is KQRQKGPARKK.

Belongs to the bacterial ribosomal protein bL36 family.

This Protochlamydia amoebophila (strain UWE25) protein is Large ribosomal subunit protein bL36.